Reading from the N-terminus, the 216-residue chain is Fibroblast growth factor 17 (216 aa).

A signal peptide spans 1 to 22; it reads MGAARLLPNLTLCLQLLILCCQ. Asparagine 137 is a glycosylation site (N-linked (GlcNAc...) asparagine). Residues 190 to 216 are disordered; the sequence is EKQKQFEFVGSAPTRRTKRTRRPQPLT. Basic residues predominate over residues 204 to 216; the sequence is RRTKRTRRPQPLT.

It belongs to the heparin-binding growth factors family. In terms of assembly, interacts with FGFR3 and FGFR4. In terms of tissue distribution, preferentially expressed in the embryonic brain.

The protein localises to the secreted. Functionally, plays an important role in the regulation of embryonic development and as signaling molecule in the induction and patterning of the embryonic brain. Required for normal brain development. In Homo sapiens (Human), this protein is Fibroblast growth factor 17 (FGF17).